Reading from the N-terminus, the 534-residue chain is Potential RNA-dependent RNA polymerase (534 aa).

One can recognise a RdRp catalytic domain in the interval 255 to 373 (DVVVCTDFSK…TYPGISAEDV (119 aa)).

It is found in the virion. The enzyme catalyses RNA(n) + a ribonucleoside 5'-triphosphate = RNA(n+1) + diphosphate. RNA-directed RNA polymerase that is involved in both transcription and genome replication. This Human picobirnavirus (strain Human/Thailand/Hy005102/-) (PBV) protein is Potential RNA-dependent RNA polymerase (Segment-2).